The chain runs to 200 residues: Small ribosomal subunit protein uS4 (200 aa).

The segment at 22–41 (TGKEIEKRPYAPGQHGPNQR) is disordered. In terms of domain architecture, S4 RNA-binding spans 92–152 (TRLDNLVYRL…EKSQNLAVVG (61 aa)).

This sequence belongs to the universal ribosomal protein uS4 family. Part of the 30S ribosomal subunit. Contacts protein S5. The interaction surface between S4 and S5 is involved in control of translational fidelity.

Functionally, one of the primary rRNA binding proteins, it binds directly to 16S rRNA where it nucleates assembly of the body of the 30S subunit. In terms of biological role, with S5 and S12 plays an important role in translational accuracy. The polypeptide is Small ribosomal subunit protein uS4 (Lysinibacillus sphaericus (strain C3-41)).